A 98-amino-acid chain; its full sequence is Large ribosomal subunit protein eL21 (98 aa).

Residues 1 to 23 (MVDRKGKGFRRKTRDKLSKHPRQ) are disordered. Residues 7–23 (KGFRRKTRDKLSKHPRQ) show a composition bias toward basic residues.

Belongs to the eukaryotic ribosomal protein eL21 family.

In Nanoarchaeum equitans (strain Kin4-M), this protein is Large ribosomal subunit protein eL21.